Here is a 282-residue protein sequence, read N- to C-terminus: Large ribosomal subunit protein uL2 (282 aa).

Disordered stretches follow at residues 31-54 (KRLTKPVRKSGGRNAHGKVTTRHI) and 223-282 (LAMN…NTQR). Basic residues-rich tracts occupy residues 34–54 (TKPVRKSGGRNAHGKVTTRHI) and 270–282 (VTRRRPGVRNTQR).

It belongs to the universal ribosomal protein uL2 family. Part of the 50S ribosomal subunit. Forms a bridge to the 30S subunit in the 70S ribosome.

In terms of biological role, one of the primary rRNA binding proteins. Required for association of the 30S and 50S subunits to form the 70S ribosome, for tRNA binding and peptide bond formation. It has been suggested to have peptidyltransferase activity; this is somewhat controversial. Makes several contacts with the 16S rRNA in the 70S ribosome. In Anaeromyxobacter dehalogenans (strain 2CP-1 / ATCC BAA-258), this protein is Large ribosomal subunit protein uL2.